Consider the following 1377-residue polypeptide: Clustered mitochondria protein homolog (1377 aa).

A disordered region spans residues 1–61 (MLKSIQRNGK…GETKKKSDSE (61 aa)). In terms of domain architecture, Clu spans 353–595 (RAEDTFSSKL…RTFPPDVNFL (243 aa)). Residues 519–552 (VYGSIDFGKTVLSHEKYLELLNNAGKHLKIYPHS) form a TPR 1 repeat. 2 disordered regions span residues 651 to 700 (NKRQ…VPKV) and 886 to 917 (DVLTKSGSSGKQQRKQNKRTAAGGGKGGKSSF). The segment covering 655 to 690 (QKQDTPKEETKAIEPAAKEDSANNNKEEPAAKKGEP) has biased composition (basic and acidic residues). The segment covering 886–896 (DVLTKSGSSGK) has biased composition (polar residues). 3 TPR repeats span residues 1022–1055 (AYNFYTTGQTKIQQGYFKDGYDLISEALNLLNNV), 1148–1181 (ALLDSNISLILHAVGEYELSLRFLEHALALNIKY), and 1183–1216 (GEKSLKVAVSYHLVARTQSCMGDFRSALNNEKET). The segment at 1310–1377 (KEGGAAGESS…SKANPVASSS (68 aa)) is disordered. A compositionally biased stretch (low complexity) spans 1364-1377 (ASSSSKANPVASSS).

Belongs to the CLU family.

It is found in the cytoplasm. In terms of biological role, mRNA-binding protein involved in proper cytoplasmic distribution of mitochondria. The sequence is that of Clustered mitochondria protein homolog from Culex quinquefasciatus (Southern house mosquito).